We begin with the raw amino-acid sequence, 310 residues long: Methionyl-tRNA formyltransferase (310 aa).

112 to 115 (SLLP) is a (6S)-5,6,7,8-tetrahydrofolate binding site.

Belongs to the Fmt family.

The enzyme catalyses L-methionyl-tRNA(fMet) + (6R)-10-formyltetrahydrofolate = N-formyl-L-methionyl-tRNA(fMet) + (6S)-5,6,7,8-tetrahydrofolate + H(+). Functionally, attaches a formyl group to the free amino group of methionyl-tRNA(fMet). The formyl group appears to play a dual role in the initiator identity of N-formylmethionyl-tRNA by promoting its recognition by IF2 and preventing the misappropriation of this tRNA by the elongation apparatus. The sequence is that of Methionyl-tRNA formyltransferase from Pelagibacter ubique (strain HTCC1062).